The following is a 223-amino-acid chain: Protein-L-isoaspartate O-methyltransferase (223 aa).

Serine 70 is a catalytic residue.

Belongs to the methyltransferase superfamily. L-isoaspartyl/D-aspartyl protein methyltransferase family.

It is found in the cytoplasm. The enzyme catalyses [protein]-L-isoaspartate + S-adenosyl-L-methionine = [protein]-L-isoaspartate alpha-methyl ester + S-adenosyl-L-homocysteine. Catalyzes the methyl esterification of L-isoaspartyl residues in peptides and proteins that result from spontaneous decomposition of normal L-aspartyl and L-asparaginyl residues. It plays a role in the repair and/or degradation of damaged proteins. In Methylobacillus flagellatus (strain ATCC 51484 / DSM 6875 / VKM B-1610 / KT), this protein is Protein-L-isoaspartate O-methyltransferase.